Here is a 277-residue protein sequence, read N- to C-terminus: Carbonyl reductase [NADPH] 3 (277 aa).

Ser-2 carries the post-translational modification N-acetylserine. NADP(+)-binding positions include 10-34, 38-42, 63-64, and Asn-90; these read VTGANRGIGLAIARELCRQFSGDVV, RDVAR, and DI. At Ser-30 the chain carries Phosphoserine. Residue Ser-140 participates in substrate binding. Tyr-194 serves as the catalytic Proton acceptor. Residues 194–198 and Asp-239 each bind NADP(+); that span reads YGVSK.

Belongs to the short-chain dehydrogenases/reductases (SDR) family. Detected in ovary, pancreas, intestine, colon, kidney, brain, thymus, lung, heart, liver, spleen, leukocyte, prostate and testis.

Its subcellular location is the cytoplasm. It carries out the reaction a secondary alcohol + NADP(+) = a ketone + NADPH + H(+). The catalysed reaction is a quinone + NADPH + H(+) = a quinol + NADP(+). Functionally, catalyzes the NADPH-dependent reduction of carbonyl compounds to their corresponding alcohols. Has low NADPH-dependent oxidoreductase activity. Acts on several orthoquinones, acts as well on non-quinone compounds, such as isatin or on the anticancer drug oracin. Best substrates for CBR3 is 1,2- naphthoquinone, hence could play a role in protection against cytotoxicity of exogenous quinones. Exerts activity toward ortho-quinones but not paraquinones. No endogenous substrate for CBR3 except isatin has been identified. The protein is Carbonyl reductase [NADPH] 3 of Homo sapiens (Human).